A 417-amino-acid chain; its full sequence is Putative competence-damage inducible protein (417 aa).

This sequence belongs to the CinA family.

This is Putative competence-damage inducible protein from Oceanobacillus iheyensis (strain DSM 14371 / CIP 107618 / JCM 11309 / KCTC 3954 / HTE831).